We begin with the raw amino-acid sequence, 309 residues long: tRNA hydroxylation protein P2 (309 aa).

The protein belongs to the peptidase U32 family.

In terms of biological role, involved in prephenate-dependent formation of 5-hydroxyuridine (ho5U) modification at position 34 in tRNAs, the first step in 5-methoxyuridine (mo5U) biosynthesis. In Bacillus subtilis (strain 168), this protein is tRNA hydroxylation protein P2.